We begin with the raw amino-acid sequence, 365 residues long: MFDMYIESGGKKLRCGYTTGSCAAAAAKAATYMLFNKKDISVIEIDTPKNIKLNLEIQDIQVEKNSISCSIVKDGGDDIDATSGLEIFAKAEEIEEGFELCGGEGVGVVTKEGLFVEKGQPAINPVPREMIKKEVLSVLPKDKGVRITIFVPRGREIAKKTFNPRLGIVDGISILGTTGIVYPMSEEALKESIRIEIRQKAVNNKDLVFVFGNMGERFLRERGYKKDNIVVISNYVGFSIECALAQGIKDLTIVGHIGKLSKIAFGCFNTHSRVSDVRLEVIALELTLMGYDLELVKKVLDQKTSEGAVRLLGEDFPMLYERIGEKVLKRLDIYAYGEANFNILMYYGSKEMKLLYESKNSNLFD.

The protein belongs to the CbiD family.

It catalyses the reaction Co-precorrin-5B + S-adenosyl-L-methionine = Co-precorrin-6A + S-adenosyl-L-homocysteine. It functions in the pathway cofactor biosynthesis; adenosylcobalamin biosynthesis; cob(II)yrinate a,c-diamide from sirohydrochlorin (anaerobic route): step 6/10. Functionally, catalyzes the methylation of C-1 in cobalt-precorrin-5B to form cobalt-precorrin-6A. This chain is Cobalt-precorrin-5B C(1)-methyltransferase, found in Clostridium perfringens (strain ATCC 13124 / DSM 756 / JCM 1290 / NCIMB 6125 / NCTC 8237 / Type A).